We begin with the raw amino-acid sequence, 312 residues long: Ribosomal protein L11 methyltransferase (312 aa).

Thr160, Gly181, Asp203, and Asn246 together coordinate S-adenosyl-L-methionine.

It belongs to the methyltransferase superfamily. PrmA family.

It localises to the cytoplasm. It carries out the reaction L-lysyl-[protein] + 3 S-adenosyl-L-methionine = N(6),N(6),N(6)-trimethyl-L-lysyl-[protein] + 3 S-adenosyl-L-homocysteine + 3 H(+). In terms of biological role, methylates ribosomal protein L11. The protein is Ribosomal protein L11 methyltransferase of Staphylococcus aureus (strain bovine RF122 / ET3-1).